The sequence spans 652 residues: Ethylmalonyl-CoA mutase (652 aa).

One can recognise a B12-binding domain in the interval 519–647 (PLKFVVGKPG…MDIVGLVDRT (129 aa)). His532 lines the adenosylcob(III)alamin pocket.

The protein belongs to the methylmalonyl-CoA mutase family. In terms of assembly, homodimer. Adenosylcob(III)alamin serves as cofactor.

It catalyses the reaction (2R)-ethylmalonyl-CoA = (2S)-methylsuccinyl-CoA. In terms of biological role, radical enzyme that catalyzes the transformation of (2R)-ethylmalonyl-CoA to (2S)-methylsuccinyl-CoA. Is involved in the ethylmalonyl-CoA pathway for acetyl-CoA assimilation required for R.sphaeroides growth on acetate as sole carbon source. Is highly specific for its substrate, ethylmalonyl-CoA, and accepts methylmalonyl-CoA only at 0.2% relative activity. The polypeptide is Ethylmalonyl-CoA mutase (Cereibacter sphaeroides (strain ATCC 17023 / DSM 158 / JCM 6121 / CCUG 31486 / LMG 2827 / NBRC 12203 / NCIMB 8253 / ATH 2.4.1.) (Rhodobacter sphaeroides)).